Reading from the N-terminus, the 674-residue chain is 1,4-alpha-glucan branching enzyme GlgB 1 (674 aa).

Asp-336 acts as the Nucleophile in catalysis. The active-site Proton donor is the Glu-389.

It belongs to the glycosyl hydrolase 13 family. GlgB subfamily. Monomer.

The enzyme catalyses Transfers a segment of a (1-&gt;4)-alpha-D-glucan chain to a primary hydroxy group in a similar glucan chain.. Its pathway is glycan biosynthesis; glycogen biosynthesis. Functionally, catalyzes the formation of the alpha-1,6-glucosidic linkages in glycogen by scission of a 1,4-alpha-linked oligosaccharide from growing alpha-1,4-glucan chains and the subsequent attachment of the oligosaccharide to the alpha-1,6 position. The chain is 1,4-alpha-glucan branching enzyme GlgB 1 from Clostridium perfringens (strain SM101 / Type A).